Reading from the N-terminus, the 1335-residue chain is Bifunctional autolysin (1335 aa).

The N-terminal stretch at Met1 to Ala29 is a signal peptide. Disordered stretches follow at residues Gln51 to Thr88, Asn100 to Glu262, and Trp514 to Leu535. 5 stretches are compositionally biased toward polar residues: residues Glu58–Thr88, Asn100–Asn127, Thr143–Ala155, Thr176–Gly223, and Ser244–Tyr258. Positions Val303–Lys863 are N-acetylmuramoyl-L-alanine amidase. Low complexity predominate over residues Gly515–Thr531. 7 GW domains span residues Asn533 to Ala610, Ala612 to Lys686, Thr700 to Ala774, Ser776 to Lys850, Ser868 to Ile943, Lys945 to Thr1020, and Gln1023 to Ile1096. An endo-beta-N-acetylglucosaminidase region spans residues Gln864–Lys1335.

This sequence in the N-terminal section; belongs to the N-acetylmuramoyl-L-alanine amidase 2 family. In the C-terminal section; belongs to the glycosyl hydrolase 73 family. Oligomer; forms a ring structure at the cell surface which is important for efficient partitioning of daughter cells after cell division. Post-translationally, undergoes proteolytic processing to generate the two extracellular lytic enzymes, probably at the septal region on the cell surface.

The protein localises to the secreted. It carries out the reaction Hydrolyzes the link between N-acetylmuramoyl residues and L-amino acid residues in certain cell-wall glycopeptides.. It catalyses the reaction an N(4)-(oligosaccharide-(1-&gt;3)-[oligosaccharide-(1-&gt;6)]-beta-D-Man-(1-&gt;4)-beta-D-GlcNAc-(1-&gt;4)-alpha-D-GlcNAc)-L-asparaginyl-[protein] + H2O = an oligosaccharide-(1-&gt;3)-[oligosaccharide-(1-&gt;6)]-beta-D-Man-(1-&gt;4)-D-GlcNAc + N(4)-(N-acetyl-beta-D-glucosaminyl)-L-asparaginyl-[protein]. Endohydrolysis of the di-N-acetylchitobiosyl unit in high-mannose glycopeptides and glycoproteins containing the -[(Man)5(GlcNAc)2]-Asn structure. One N-acetyl-D-glucosamine residue remains attached to the protein; the rest of the oligosaccharide is released intact. Cleaves the peptidoglycan connecting the daughter cells at the end of the cell division cycle, resulting in the separation of the two newly divided cells. Acts as an autolysin in penicillin-induced lysis. This Staphylococcus epidermidis (strain ATCC 12228 / FDA PCI 1200) protein is Bifunctional autolysin (atl).